Consider the following 332-residue polypeptide: Abl interactor homolog (332 aa).

The stretch at 73-104 (HITSLLQLQTNEMEKLNIEIQTLTQRVRMIHD) forms a coiled coil. Residues 152 to 332 (SDINQNGVPP…NDFPPPPPPM (181 aa)) are disordered. Residues 164 to 206 (NHSNSSANLTSSSGHLAASSTSNSSTPSYQSPSYSSQPTISSG) show a composition bias toward low complexity. The span at 221–247 (APPPPSLSVPAAPPPPVMNVPPPPPTS) shows a compositional bias: pro residues. A compositionally biased stretch (polar residues) spans 248–257 (QRPSSVNNNA). Positions 277–314 (LPPPPSFGLPPPPTLGDDFPPPPPPPVGSYDFPPPPAR) are enriched in pro residues.

This sequence belongs to the ABI family. Part of a Scar/WAVE complex containing brk1, scrA, abiA, pirA and napA. Interacts with scrA.

Functionally, involved in regulation of actin and microtubule organization. Required for proper cytokinesis. This chain is Abl interactor homolog (abiA), found in Dictyostelium discoideum (Social amoeba).